We begin with the raw amino-acid sequence, 321 residues long: Glycerol-3-phosphate phosphatase (321 aa).

Catalysis depends on Asp-34, which acts as the Nucleophile. 3 residues coordinate Mg(2+): Asp-34, Asp-36, and Asp-260. The active-site Proton donor is Asp-36.

This sequence belongs to the HAD-like hydrolase superfamily. CbbY/CbbZ/Gph/YieH family. In terms of assembly, homodimer. Requires Mg(2+) as cofactor. Detected in all tissues including red cells, lymphocytes and cultured fibroblasts (at protein level). The highest activities occur in skeletal muscle and cardiac muscle.

The catalysed reaction is O-phospho-L-tyrosyl-[protein] + H2O = L-tyrosyl-[protein] + phosphate. It carries out the reaction sn-glycerol 1-phosphate + H2O = glycerol + phosphate. It catalyses the reaction sn-glycerol 3-phosphate + H2O = glycerol + phosphate. Its function is as follows. Glycerol-3-phosphate phosphatase hydrolyzing glycerol-3-phosphate into glycerol. Thereby, regulates the cellular levels of glycerol-3-phosphate a metabolic intermediate of glucose, lipid and energy metabolism. Was also shown to have a 2-phosphoglycolate phosphatase activity and a tyrosine-protein phosphatase activity. However, their physiological relevance is unclear. In vitro, also has a phosphatase activity toward ADP, ATP, GDP and GTP. This chain is Glycerol-3-phosphate phosphatase, found in Homo sapiens (Human).